A 783-amino-acid chain; its full sequence is MASLDDPGEVREGFLCPLCLKDLQSFYQLQSHYEEEHLEDRDVKGQIKNLVQKARKAKNKLLKREGDDRVEPGTQGYESFSYGGVDPYMWEPQELGAMRSHLSDFKKHRAARIDHYVVEVNKLIIRLEKLTAFDRTNTETSKIRAIEKSVVPWVNDQDVPFCPDCGNKFSIRNRRHHCRLCGSIMCKKCMELIGLPLAHKLTSASKDSLSTHTSPSQSPNSVHGSRRGSISSMSSVSSVLDEKDDDRIRCCTHCKDKLLKREQQMDEKEHTPDIVKLYEKLRLCMEKVDQKAPEYIRMAASLNAGETTYNLEHANDLRVEVQKVYELIDALSKKILTLGLNQDPSPHPNTLRLQRMIRYSATLFVQEKLLGLMSLPTKEQFEELKKKRKQDLEQKRTVERQAALESRRKLEERQSGLASHTANGDVRSLRGIPPPLRKAEGWLPLSEGQGQSEDPDPLLQQIYNITSFIRQAKAAGRTDEVRTLQENLRQLQDEYDQQQTEKAIELSRKQAEEEELQREQLQMLRKRELEREQEQFLAASLQTRTRVLELREVIPFQLEASRGPHIDLSYSLDQDSSPVQSSTAPDILTPGSALAPMHLWSGPPALGQETLPQSTMSQQSDKASLNPFDEDDLSSPTEGAISPAAVEAFLGPPAAVTKEYNPFEEDAEEEEVAELGAGNPFTDPDSPAPNPFDEDDGPRPASPAAPGNPFEECPSTNPFEVDSDSGMEAEEHIEEELLLQQIDNIKAYIFDAKQCGRMDEVEVLTENLRELKCTLAKQKGAPN.

A2 carries the post-translational modification N-acetylalanine. A Phosphoserine modification is found at S3. Residues 14–37 (FLCPLCLKDLQSFYQLQSHYEEEH) form a C2H2-type zinc finger. Residues 99-262 (RSHLSDFKKH…HCKDKLLKRE (164 aa)) are necessary for the correct targeting to endosomes. An FYVE-type zinc finger spans residues 156–259 (DQDVPFCPDC…CCTHCKDKLL (104 aa)). Zn(2+) contacts are provided by C162, C165, C178, C181, C186, and C189. Over residues 206-223 (KDSLSTHTSPSQSPNSVH) the composition is skewed to polar residues. Residues 206 to 240 (KDSLSTHTSPSQSPNSVHGSRRGSISSMSSVSSVL) are disordered. Residues S214, S218, S225, and S229 each carry the phosphoserine modification. Residues 227-239 (RGSISSMSSVSSV) show a composition bias toward low complexity. Zn(2+)-binding residues include C251 and C254. A necessary for interaction with RAB4A region spans residues 263–499 (QQMDEKEHTP…QLQDEYDQQQ (237 aa)). Residues 263–783 (QQMDEKEHTP…TLAKQKGAPN (521 aa)) are necessary for interaction with EHD1. Coiled-coil stretches lie at residues 377–412 (TKEQ…KLEE) and 471–531 (QAKA…ELER). Composition is skewed to basic and acidic residues over residues 387-399 (KRKQ…RTVE) and 405-414 (ESRRKLEERQ). A disordered region spans residues 387–433 (KRKQDLEQKRTVERQAALESRRKLEERQSGLASHTANGDVRSLRGIP). The UIM domain maps to 495 to 514 (YDQQQTEKAIELSRKQAEEE). Disordered stretches follow at residues 569–638 (SYSL…SPTE) and 663–733 (FEED…EEHI). Polar residues-rich tracts occupy residues 571-584 (SLDQ…SSTA) and 610-623 (TLPQ…SDKA). The interval 627-783 (PFDEDDLSSP…TLAKQKGAPN (157 aa)) is necessary for interaction with RAB5A. The segment covering 663–673 (FEEDAEEEEVA) has biased composition (acidic residues). S686 carries the post-translational modification Phosphoserine. Positions 721 to 733 (VDSDSGMEAEEHI) are enriched in acidic residues.

As to quaternary structure, interacts with EHD1, RAB4A, RAB5A, RAB22A, RAB24 and VPS45. Binds simultaneously to RAB4A and RAB5A in vitro. Interacts with RAB4A and RAB5A that has been activated by GTP binding.

It is found in the cell membrane. Its subcellular location is the early endosome membrane. Functionally, rab4/Rab5 effector protein acting in early endocytic membrane fusion and membrane trafficking of recycling endosomes. Required for endosome fusion either homotypically or with clathrin coated vesicles. Plays a role in the lysosomal trafficking of CTSD/cathepsin D from the Golgi to lysosomes. Also promotes the recycling of transferrin directly from early endosomes to the plasma membrane. Binds phospholipid vesicles containing phosphatidylinositol 3-phosphate (PtdInsP3). Plays a role in the recycling of transferrin receptor to the plasma membrane. The sequence is that of Rabenosyn-5 from Mus musculus (Mouse).